The sequence spans 86 residues: Protein Tat (86 aa).

The segment at 1-21 (MDPVDPNLEPWNHPGSQPKTA) is disordered. The interval 1-24 (MDPVDPNLEPWNHPGSQPKTACNR) is interaction with human CREBBP. The interval 1–48 (MDPVDPNLEPWNHPGSQPKTACNRCHCKKCCYHCQVCFITKGLGISYG) is transactivation. Residues C22, C25, and C27 each contribute to the Zn(2+) site. A cysteine-rich region spans residues 22-37 (CNRCHCKKCCYHCQVC). N6-acetyllysine; by host PCAF is present on K28. Zn(2+) is bound by residues C30, H33, C34, and C37. Residues 38-48 (FITKGLGISYG) form a core region. Residues 47 to 86 (YGRKKRRQRRRPSQGGQTHQDPIPKQPSSQPRGNPTGPKE) form a disordered region. A compositionally biased stretch (basic residues) spans 48–58 (GRKKRRQRRRP). The Nuclear localization signal, RNA-binding (TAR), and protein transduction motif lies at 49–57 (RKKRRQRRR). The interaction with the host capping enzyme RNGTT stretch occupies residues 49-86 (RKKRRQRRRPSQGGQTHQDPIPKQPSSQPRGNPTGPKE). K50 and K51 each carry N6-acetyllysine; by host EP300 and GCN5L2. Asymmetric dimethylarginine; by host PRMT6 occurs at positions 52 and 53. Over residues 60-79 (QGGQTHQDPIPKQPSSQPRG) the composition is skewed to polar residues. Residue K71 forms a Glycyl lysine isopeptide (Lys-Gly) (interchain with G-Cter in ubiquitin) linkage.

Belongs to the lentiviruses Tat family. Interacts with host CCNT1. Associates with the P-TEFb complex composed at least of Tat, P-TEFb (CDK9 and CCNT1), TAR RNA, RNA Pol II. Recruits the HATs CREBBP, TAF1/TFIID, EP300, PCAF and GCN5L2. Interacts with host KAT5/Tip60; this interaction targets the latter to degradation. Interacts with the host deacetylase SIRT1. Interacts with host capping enzyme RNGTT; this interaction stimulates RNGTT. Binds to host KDR, and to the host integrins ITGAV/ITGB3 and ITGA5/ITGB1. Interacts with host KPNB1/importin beta-1 without previous binding to KPNA1/importin alpha-1. Interacts with EIF2AK2. Interacts with host nucleosome assembly protein NAP1L1; this interaction may be required for the transport of Tat within the nucleus, since the two proteins interact at the nuclear rim. Interacts with host C1QBP/SF2P32; this interaction involves lysine-acetylated Tat. Interacts with the host chemokine receptors CCR2, CCR3 and CXCR4. Interacts with host DPP4/CD26; this interaction may trigger an anti-proliferative effect. Interacts with host LDLR. Interacts with the host extracellular matrix metalloproteinase MMP1. Interacts with host PRMT6; this interaction mediates Tat's methylation. Interacts with, and is ubiquitinated by MDM2/Hdm2. Interacts with host PSMC3 and HTATIP2. Interacts with STAB1; this interaction may overcome SATB1-mediated repression of IL2 and IL2RA (interleukin) in T cells by binding to the same domain than HDAC1. Interacts (when acetylated) with human CDK13, thereby increasing HIV-1 mRNA splicing and promoting the production of the doubly spliced HIV-1 protein Nef. Interacts with host TBP; this interaction modulates the activity of transcriptional pre-initiation complex. Interacts with host RELA. Interacts with host PLSCR1; this interaction negatively regulates Tat transactivation activity by altering its subcellular distribution. Post-translationally, asymmetrical arginine methylation by host PRMT6 seems to diminish the transactivation capacity of Tat and affects the interaction with host CCNT1. Acetylation by EP300, CREBBP, GCN5L2/GCN5 and PCAF regulates the transactivation activity of Tat. EP300-mediated acetylation of Lys-50 promotes dissociation of Tat from the TAR RNA through the competitive binding to PCAF's bromodomain. In addition, the non-acetylated Tat's N-terminus can also interact with PCAF. PCAF-mediated acetylation of Lys-28 enhances Tat's binding to CCNT1. Lys-50 is deacetylated by SIRT1. In terms of processing, polyubiquitination by host MDM2 does not target Tat to degradation, but activates its transactivation function and fosters interaction with CCNT1 and TAR RNA. Post-translationally, phosphorylated by EIF2AK2 on serine and threonine residues adjacent to the basic region important for TAR RNA binding and function. Phosphorylation of Tat by EIF2AK2 is dependent on the prior activation of EIF2AK2 by dsRNA.

It is found in the host nucleus. It localises to the host nucleolus. The protein resides in the host cytoplasm. Its subcellular location is the secreted. Its function is as follows. Transcriptional activator that increases RNA Pol II processivity, thereby increasing the level of full-length viral transcripts. Recognizes a hairpin structure at the 5'-LTR of the nascent viral mRNAs referred to as the transactivation responsive RNA element (TAR) and recruits the cyclin T1-CDK9 complex (P-TEFb complex) that will in turn hyperphosphorylate the RNA polymerase II to allow efficient elongation. The CDK9 component of P-TEFb and other Tat-activated kinases hyperphosphorylate the C-terminus of RNA Pol II that becomes stabilized and much more processive. Other factors such as HTATSF1/Tat-SF1, SUPT5H/SPT5, and HTATIP2 are also important for Tat's function. Besides its effect on RNA Pol II processivity, Tat induces chromatin remodeling of proviral genes by recruiting the histone acetyltransferases (HATs) CREBBP, EP300 and PCAF to the chromatin. This also contributes to the increase in proviral transcription rate, especially when the provirus integrates in transcriptionally silent region of the host genome. To ensure maximal activation of the LTR, Tat mediates nuclear translocation of NF-kappa-B by interacting with host RELA. Through its interaction with host TBP, Tat may also modulate transcription initiation. Tat can reactivate a latently infected cell by penetrating in it and transactivating its LTR promoter. In the cytoplasm, Tat is thought to act as a translational activator of HIV-1 mRNAs. Extracellular circulating Tat can be endocytosed by surrounding uninfected cells via the binding to several surface receptors such as CD26, CXCR4, heparan sulfate proteoglycans (HSPG) or LDLR. Neurons are rarely infected, but they internalize Tat via their LDLR. Through its interaction with nuclear HATs, Tat is potentially able to control the acetylation-dependent cellular gene expression. Modulates the expression of many cellular genes involved in cell survival, proliferation or in coding for cytokines or cytokine receptors. Tat plays a role in T-cell and neurons apoptosis. Tat induced neurotoxicity and apoptosis probably contribute to neuroAIDS. Circulating Tat also acts as a chemokine-like and/or growth factor-like molecule that binds to specific receptors on the surface of the cells, affecting many cellular pathways. In the vascular system, Tat binds to ITGAV/ITGB3 and ITGA5/ITGB1 integrins dimers at the surface of endothelial cells and competes with bFGF for heparin-binding sites, leading to an excess of soluble bFGF. The chain is Protein Tat from Homo sapiens (Human).